Reading from the N-terminus, the 436-residue chain is Adenylosuccinate synthetase (436 aa).

Residues 12-18 and 40-42 each bind GTP; these read GDEGKGK and GHT. Catalysis depends on Asp13, which acts as the Proton acceptor. Asp13 and Gly40 together coordinate Mg(2+). IMP contacts are provided by residues 13-16, 38-41, Thr128, Arg142, Gln223, Thr238, and Arg302; these read DEGK and NAGH. His41 serves as the catalytic Proton donor. 298-304 contacts substrate; sequence TTTGRRR. Residues Arg304, 330-332, and 412-414 each bind GTP; these read KLD and SLG.

Belongs to the adenylosuccinate synthetase family. Homodimer. The cofactor is Mg(2+).

Its subcellular location is the cytoplasm. It carries out the reaction IMP + L-aspartate + GTP = N(6)-(1,2-dicarboxyethyl)-AMP + GDP + phosphate + 2 H(+). Its pathway is purine metabolism; AMP biosynthesis via de novo pathway; AMP from IMP: step 1/2. Functionally, plays an important role in the de novo pathway of purine nucleotide biosynthesis. Catalyzes the first committed step in the biosynthesis of AMP from IMP. The chain is Adenylosuccinate synthetase from Prochlorococcus marinus (strain MIT 9515).